A 410-amino-acid polypeptide reads, in one-letter code: Elongation factor Tu (410 aa).

Residues 10–219 form the tr-type G domain; the sequence is KTHVNVGTIG…ALDTYIPDPV (210 aa). Residues 19-26, 88-92, and 143-146 contribute to the GTP site; these read GHVDHGKT, DCPGH, and NKCD. Position 26 (Thr26) interacts with Mg(2+).

It belongs to the TRAFAC class translation factor GTPase superfamily. Classic translation factor GTPase family. EF-Tu/EF-1A subfamily. In terms of assembly, monomer.

The protein localises to the cytoplasm. It catalyses the reaction GTP + H2O = GDP + phosphate + H(+). GTP hydrolase that promotes the GTP-dependent binding of aminoacyl-tRNA to the A-site of ribosomes during protein biosynthesis. This is Elongation factor Tu from Brachyspira hyodysenteriae (Treponema hyodysenteriae).